Consider the following 209-residue polypeptide: Small ribosomal subunit protein uS4 (209 aa).

Residues 98–158 (SRVDNIVYRL…EKSRSLAAIK (61 aa)) enclose the S4 RNA-binding domain.

It belongs to the universal ribosomal protein uS4 family. Part of the 30S ribosomal subunit. Contacts protein S5. The interaction surface between S4 and S5 is involved in control of translational fidelity.

Functionally, one of the primary rRNA binding proteins, it binds directly to 16S rRNA where it nucleates assembly of the body of the 30S subunit. With S5 and S12 plays an important role in translational accuracy. The sequence is that of Small ribosomal subunit protein uS4 from Pseudothermotoga lettingae (strain ATCC BAA-301 / DSM 14385 / NBRC 107922 / TMO) (Thermotoga lettingae).